The following is a 63-amino-acid chain: MANESNKTVKVRLVRGLRGTQSRHRLSVRALGLNKLNDVRELKDSPQVRGLINKVQYLVQVEE.

It belongs to the universal ribosomal protein uL30 family. As to quaternary structure, part of the 50S ribosomal subunit.

The chain is Large ribosomal subunit protein uL30 from Stenotrophomonas maltophilia (strain K279a).